Consider the following 126-residue polypeptide: Putative regulator AldR (126 aa).

The protein belongs to the RutC family.

Implicated in the regulation of isoleucine biosynthesis. This is Putative regulator AldR (aldR) from Lactococcus lactis subsp. lactis (strain IL1403) (Streptococcus lactis).